The following is a 77-amino-acid chain: Large ribosomal subunit protein uL29 (77 aa).

It belongs to the universal ribosomal protein uL29 family.

This chain is Large ribosomal subunit protein uL29, found in Mycolicibacterium smegmatis (strain ATCC 700084 / mc(2)155) (Mycobacterium smegmatis).